The chain runs to 361 residues: Mannose-1-phosphate guanyltransferase (361 aa).

This sequence belongs to the transferase hexapeptide repeat family.

The protein localises to the cytoplasm. The catalysed reaction is alpha-D-mannose 1-phosphate + GTP + H(+) = GDP-alpha-D-mannose + diphosphate. The protein operates within nucleotide-sugar biosynthesis; GDP-alpha-D-mannose biosynthesis; GDP-alpha-D-mannose from alpha-D-mannose 1-phosphate (GTP route): step 1/1. Functionally, involved in cell wall synthesis where it is required for glycosylation. Involved in cell cycle progression through cell-size checkpoint. The sequence is that of Mannose-1-phosphate guanyltransferase (MPG1) from Eremothecium gossypii (strain ATCC 10895 / CBS 109.51 / FGSC 9923 / NRRL Y-1056) (Yeast).